The following is a 181-amino-acid chain: Resolvase/recombinase (181 aa).

The Resolvase/invertase-type recombinase catalytic domain maps to 2–137 (RLFGYARVST…EGRLEAKAKG (136 aa)). The O-(5'-phospho-DNA)-serine intermediate role is filled by Ser-10. A DNA-binding region (H-T-H motif) is located at residues 161–180 (AMEIAKRLKIGRSTVYKVLA).

The protein belongs to the site-specific recombinase resolvase family.

Site-specific recombination protein. This Pseudomonas putida (Arthrobacter siderocapsulatus) protein is Resolvase/recombinase.